The primary structure comprises 302 residues: MLGKARELANYQDEPEQLPTGSFGKNAFLRLGFERRPERTVLATLHRRAPLIVQQALYWDEGMPTLPCVSIISNAGGILQGDRYAIEIDLEPDTQAHVTTQSATRIQEMDANFATQTQTITLGANSYLEYIPHPIIPHKHSRFVQQTEVTIHPTATLIYSEVLMAGRKYYGTGELFHYDLFSSKFHAAHTDGTSLFTEKFIVEPARGNVSRLGAMGSFHVFCNLILLTPKTHADRLFETIDPVFDMDEGIAWGASRLPNDAGLLFKVMGMESAPVRAAIRKIWEAARQEVTGASLPENFLWA.

The protein belongs to the UreD family. In terms of assembly, ureD, UreF and UreG form a complex that acts as a GTP-hydrolysis-dependent molecular chaperone, activating the urease apoprotein by helping to assemble the nickel containing metallocenter of UreC. The UreE protein probably delivers the nickel.

Its subcellular location is the cytoplasm. In terms of biological role, required for maturation of urease via the functional incorporation of the urease nickel metallocenter. This is Urease accessory protein UreD 2 from Brucella ovis (strain ATCC 25840 / 63/290 / NCTC 10512).